Reading from the N-terminus, the 272-residue chain is uncharacterized protein (272 aa).

This is an uncharacterized protein from Saccharomyces cerevisiae (strain ATCC 204508 / S288c) (Baker's yeast).